A 76-amino-acid chain; its full sequence is uncharacterized protein (76 aa).

The required for interaction with PPP3CA stretch occupies residues 36 to 41; it reads PDIIIT. Phosphothreonine occurs at positions 44 and 46.

In terms of assembly, interacts (via PxIxIT motif, when phosphorylated on Thr-44) with PPP3CA. Not expressed in pancreatic duct cells (at protein level). Abundantly expressed in the pancreas and weakly expressed in the thyroid. As to expression, not expressed in pancreatic duct cells (at protein level). Abundantly expressed in the lymph node and weakly expressed in the stomach, trachea and bone marrow.

This is an uncharacterized protein from Homo sapiens (Human).